A 156-amino-acid polypeptide reads, in one-letter code: Small ribosomal subunit protein uS7 (156 aa).

The protein belongs to the universal ribosomal protein uS7 family. In terms of assembly, part of the 30S ribosomal subunit. Contacts proteins S9 and S11.

In terms of biological role, one of the primary rRNA binding proteins, it binds directly to 16S rRNA where it nucleates assembly of the head domain of the 30S subunit. Is located at the subunit interface close to the decoding center, probably blocks exit of the E-site tRNA. The protein is Small ribosomal subunit protein uS7 of Pectobacterium atrosepticum (strain SCRI 1043 / ATCC BAA-672) (Erwinia carotovora subsp. atroseptica).